A 232-amino-acid polypeptide reads, in one-letter code: 6-phosphogluconolactonase (232 aa).

Belongs to the glucosamine/galactosamine-6-phosphate isomerase family. 6-phosphogluconolactonase subfamily.

The enzyme catalyses 6-phospho-D-glucono-1,5-lactone + H2O = 6-phospho-D-gluconate + H(+). It functions in the pathway carbohydrate degradation; pentose phosphate pathway; D-ribulose 5-phosphate from D-glucose 6-phosphate (oxidative stage): step 2/3. Functionally, hydrolysis of 6-phosphogluconolactone to 6-phosphogluconate. The chain is 6-phosphogluconolactonase (pgl) from Caulobacter vibrioides (strain ATCC 19089 / CIP 103742 / CB 15) (Caulobacter crescentus).